Consider the following 150-residue polypeptide: NADH-quinone oxidoreductase subunit A (150 aa).

A run of 3 helical transmembrane segments spans residues 14 to 34 (FAVF…GAFF), 66 to 86 (FYLV…LYAW), and 96 to 116 (IGFI…VYLV).

Belongs to the complex I subunit 3 family. NDH-1 is composed of 13 different subunits. Subunits NuoA, H, J, K, L, M, N constitute the membrane sector of the complex.

Its subcellular location is the cell inner membrane. The catalysed reaction is a quinone + NADH + 5 H(+)(in) = a quinol + NAD(+) + 4 H(+)(out). Its function is as follows. NDH-1 shuttles electrons from NADH, via FMN and iron-sulfur (Fe-S) centers, to quinones in the respiratory chain. The immediate electron acceptor for the enzyme in this species is believed to be ubiquinone. Couples the redox reaction to proton translocation (for every two electrons transferred, four hydrogen ions are translocated across the cytoplasmic membrane), and thus conserves the redox energy in a proton gradient. The sequence is that of NADH-quinone oxidoreductase subunit A from Yersinia enterocolitica serotype O:8 / biotype 1B (strain NCTC 13174 / 8081).